The primary structure comprises 269 residues: Surfeit locus protein 4 (269 aa).

A run of 5 helical transmembrane segments spans residues 65 to 85 (LASSFVFLNLLGQLTGCVLVL), 92 to 112 (YACFGLFGIIALQTIAYSILW), 179 to 199 (FFSIIQNIVGTALMILVAIGF), 203 to 223 (LAALTLVVWLFAINVYFNAFW), and 242 to 262 (TMSVIGGLLLVVALGPGGVSM). A Di-lysine motif motif is present at residues 266–269 (KKEW).

The protein belongs to the SURF4 family. In terms of assembly, found in a complex composed at least of SURF4, TMED2 and TMED10. May interact with LMAN1. Interacts with ZFYVE27 and with KIF5A in a ZFYVE27-dependent manner. Interacts with STING1. Interacts with SAR1B. Interacts with TMEM41B.

It is found in the endoplasmic reticulum membrane. The protein resides in the endoplasmic reticulum-Golgi intermediate compartment membrane. It localises to the golgi apparatus membrane. Endoplasmic reticulum cargo receptor that mediates the export of lipoproteins by recruiting cargos into COPII vesicles to facilitate their secretion. Acts as a cargo receptor for lipoproteins bearing both APOB and APOA1, thereby regulating lipoprotein delivery and the maintenance of lipid homeostasis. Synergizes with the GTPase SAR1B to mediate transport of circulating lipoproteins. Promotes the secretion of PCSK9. Also mediates the efficient secretion of erythropoietin (EPO). May also play a role in the maintenance of the architecture of the endoplasmic reticulum-Golgi intermediate compartment and of the Golgi. The sequence is that of Surfeit locus protein 4 from Mus musculus (Mouse).